A 295-amino-acid polypeptide reads, in one-letter code: ATP synthase gamma chain (295 aa).

It belongs to the ATPase gamma chain family. As to quaternary structure, F-type ATPases have 2 components, CF(1) - the catalytic core - and CF(0) - the membrane proton channel. CF(1) has five subunits: alpha(3), beta(3), gamma(1), delta(1), epsilon(1). CF(0) has three main subunits: a, b and c.

Its subcellular location is the cell inner membrane. Its function is as follows. Produces ATP from ADP in the presence of a proton gradient across the membrane. The gamma chain is believed to be important in regulating ATPase activity and the flow of protons through the CF(0) complex. This is ATP synthase gamma chain from Campylobacter curvus (strain 525.92).